A 1398-amino-acid polypeptide reads, in one-letter code: DNA-directed RNA polymerase subunit beta' (1398 aa).

4 residues coordinate Zn(2+): cysteine 70, cysteine 72, cysteine 85, and cysteine 88. Mg(2+) is bound by residues aspartate 460, aspartate 462, and aspartate 464. 4 residues coordinate Zn(2+): cysteine 814, cysteine 888, cysteine 895, and cysteine 898.

This sequence belongs to the RNA polymerase beta' chain family. As to quaternary structure, the RNAP catalytic core consists of 2 alpha, 1 beta, 1 beta' and 1 omega subunit. When a sigma factor is associated with the core the holoenzyme is formed, which can initiate transcription. Mg(2+) is required as a cofactor. It depends on Zn(2+) as a cofactor.

The catalysed reaction is RNA(n) + a ribonucleoside 5'-triphosphate = RNA(n+1) + diphosphate. Its function is as follows. DNA-dependent RNA polymerase catalyzes the transcription of DNA into RNA using the four ribonucleoside triphosphates as substrates. This Pseudomonas putida (Arthrobacter siderocapsulatus) protein is DNA-directed RNA polymerase subunit beta'.